The primary structure comprises 255 residues: Triosephosphate isomerase (255 aa).

Position 9–11 (9–11) interacts with substrate; that stretch reads NWK. Catalysis depends on His-95, which acts as the Electrophile. The active-site Proton acceptor is the Glu-167. Substrate is bound by residues Gly-173, Ser-212, and 233-234; that span reads GG.

The protein belongs to the triosephosphate isomerase family. In terms of assembly, homodimer.

The protein localises to the cytoplasm. It carries out the reaction D-glyceraldehyde 3-phosphate = dihydroxyacetone phosphate. The protein operates within carbohydrate biosynthesis; gluconeogenesis. Its pathway is carbohydrate degradation; glycolysis; D-glyceraldehyde 3-phosphate from glycerone phosphate: step 1/1. Its function is as follows. Involved in the gluconeogenesis. Catalyzes stereospecifically the conversion of dihydroxyacetone phosphate (DHAP) to D-glyceraldehyde-3-phosphate (G3P). This Klebsiella pneumoniae protein is Triosephosphate isomerase.